Consider the following 304-residue polypeptide: Putative S-adenosyl-L-methionine-dependent methyltransferase MUL_0816 (304 aa).

Residues aspartate 130 and 159-160 (DL) each bind S-adenosyl-L-methionine.

Belongs to the UPF0677 family.

Its function is as follows. Exhibits S-adenosyl-L-methionine-dependent methyltransferase activity. The sequence is that of Putative S-adenosyl-L-methionine-dependent methyltransferase MUL_0816 from Mycobacterium ulcerans (strain Agy99).